The following is a 610-amino-acid chain: All-trans-retinol 13,14-reductase (610 aa).

A signal peptide spans 1-18; it reads MWLPLVLFLAVLLLAVVC.

It belongs to the carotenoid/retinoid oxidoreductase family. CrtISO subfamily. Requires NAD(+) as cofactor. It depends on NADP(+) as a cofactor. The cofactor is FAD.

The protein localises to the endoplasmic reticulum membrane. It catalyses the reaction all-trans-13,14-dihydroretinol + A = all-trans-retinol + AH2. Its function is as follows. Catalyzes the saturation of all-trans-retinol to all-trans-13,14-dihydroretinol. Does not exhibit any activity toward all-trans-retinoic acid, nor 9-cis, 11-cis or 13-cis-retinol isomers. May play a role in the metabolism of vitamin A. Independently of retinol conversion, may regulate liver metabolism upstream of MLXIPL/ChREBP. May play a role in adipocyte differentiation. The sequence is that of All-trans-retinol 13,14-reductase (RETSAT) from Macaca fascicularis (Crab-eating macaque).